Consider the following 206-residue polypeptide: Large ribosomal subunit protein uL4 (206 aa).

The segment at 46–77 (GTRAQKDREQVKHSTKKPFKQKGTGRARAGMT) is disordered. A compositionally biased stretch (basic residues) spans 58–70 (HSTKKPFKQKGTG).

The protein belongs to the universal ribosomal protein uL4 family. As to quaternary structure, part of the 50S ribosomal subunit.

Functionally, one of the primary rRNA binding proteins, this protein initially binds near the 5'-end of the 23S rRNA. It is important during the early stages of 50S assembly. It makes multiple contacts with different domains of the 23S rRNA in the assembled 50S subunit and ribosome. Its function is as follows. Forms part of the polypeptide exit tunnel. In Albidiferax ferrireducens (strain ATCC BAA-621 / DSM 15236 / T118) (Rhodoferax ferrireducens), this protein is Large ribosomal subunit protein uL4.